The sequence spans 151 residues: 18 kDa heat shock protein (151 aa).

Positions 38–151 (TFNGNAGFKV…KDNGRRIDIH (114 aa)) constitute a sHSP domain.

It belongs to the small heat shock protein (HSP20) family.

Functionally, probable chaperone. This chain is 18 kDa heat shock protein (hsp18), found in Clostridium acetobutylicum (strain ATCC 824 / DSM 792 / JCM 1419 / IAM 19013 / LMG 5710 / NBRC 13948 / NRRL B-527 / VKM B-1787 / 2291 / W).